We begin with the raw amino-acid sequence, 81 residues long: Large ribosomal subunit protein uL23 (81 aa).

Belongs to the universal ribosomal protein uL23 family. Part of the 50S ribosomal subunit. Contacts protein L29.

Binds to 23S rRNA. One of the proteins that surrounds the polypeptide exit tunnel on the outside of the ribosome. The chain is Large ribosomal subunit protein uL23 from Pyrobaculum aerophilum (strain ATCC 51768 / DSM 7523 / JCM 9630 / CIP 104966 / NBRC 100827 / IM2).